A 301-amino-acid polypeptide reads, in one-letter code: UDP-N-acetylenolpyruvoylglucosamine reductase (301 aa).

An FAD-binding PCMH-type domain is found at 26 to 193 (KTGGPAQYLA…VSATFGLEPG (168 aa)). The active site involves arginine 172. The Proton donor role is filled by serine 222. Glutamate 292 is an active-site residue.

This sequence belongs to the MurB family. Requires FAD as cofactor.

It localises to the cytoplasm. It carries out the reaction UDP-N-acetyl-alpha-D-muramate + NADP(+) = UDP-N-acetyl-3-O-(1-carboxyvinyl)-alpha-D-glucosamine + NADPH + H(+). Its pathway is cell wall biogenesis; peptidoglycan biosynthesis. Its function is as follows. Cell wall formation. This is UDP-N-acetylenolpyruvoylglucosamine reductase from Lactobacillus johnsonii (strain CNCM I-12250 / La1 / NCC 533).